A 170-amino-acid chain; its full sequence is Thioredoxin-like protein YneN (170 aa).

The helical transmembrane segment at 5–23 threads the bilayer; the sequence is WLAGILLIMLVGYTGWNLY. The Thioredoxin domain occupies 33-170; it reads IQEGQQAPDF…KEMEQKLDLD (138 aa). A disulfide bond links cysteine 71 and cysteine 74.

The protein belongs to the thioredoxin family.

The protein resides in the cell membrane. In Bacillus subtilis (strain 168), this protein is Thioredoxin-like protein YneN (yneN).